Here is a 61-residue protein sequence, read N- to C-terminus: Small ribosomal subunit protein uS14 (61 aa).

4 residues coordinate Zn(2+): C24, C27, C40, and C43.

This sequence belongs to the universal ribosomal protein uS14 family. Zinc-binding uS14 subfamily. In terms of assembly, part of the 30S ribosomal subunit. Contacts proteins S3 and S10. Requires Zn(2+) as cofactor.

Binds 16S rRNA, required for the assembly of 30S particles and may also be responsible for determining the conformation of the 16S rRNA at the A site. This chain is Small ribosomal subunit protein uS14, found in Treponema denticola (strain ATCC 35405 / DSM 14222 / CIP 103919 / JCM 8153 / KCTC 15104).